Consider the following 318-residue polypeptide: Dual specificity protein phosphatase 2 (318 aa).

Residues 27–148 form the Rhodanese domain; it reads EAERTLLLDC…FQTYCPDLCS (122 aa). The region spanning 176 to 317 is the Tyrosine-protein phosphatase domain; it reads GPVEILPYLY…LLQLETQVLC (142 aa). Cys261 (phosphocysteine intermediate) is an active-site residue.

This sequence belongs to the protein-tyrosine phosphatase family. Non-receptor class dual specificity subfamily. In terms of assembly, interacts with MAPK14; this interaction does not lead to catalytic activation of DUSP2 and dephosphrylation of MAPK14. As to expression, in hematopoietic tissues such as spleen and thymus.

The protein localises to the nucleus. The enzyme catalyses O-phospho-L-tyrosyl-[protein] + H2O = L-tyrosyl-[protein] + phosphate. It carries out the reaction O-phospho-L-threonyl-[protein] + H2O = L-threonyl-[protein] + phosphate. Its function is as follows. Dephosphorylates both phosphorylated Thr and Tyr residues in MAPK1, and dephosphorylation of phosphotyrosine is slightly faster than that of phosphothreonine. Can dephosphorylate MAPK1. This Mus musculus (Mouse) protein is Dual specificity protein phosphatase 2.